A 210-amino-acid chain; its full sequence is Probable nicotinate-nucleotide adenylyltransferase (210 aa).

Belongs to the NadD family.

The catalysed reaction is nicotinate beta-D-ribonucleotide + ATP + H(+) = deamido-NAD(+) + diphosphate. It participates in cofactor biosynthesis; NAD(+) biosynthesis; deamido-NAD(+) from nicotinate D-ribonucleotide: step 1/1. In terms of biological role, catalyzes the reversible adenylation of nicotinate mononucleotide (NaMN) to nicotinic acid adenine dinucleotide (NaAD). The protein is Probable nicotinate-nucleotide adenylyltransferase of Streptococcus mutans serotype c (strain ATCC 700610 / UA159).